The following is a 158-amino-acid chain: Putative metalloproteinase inhibitor tag-225 (158 aa).

The first 20 residues, 1 to 20, serve as a signal peptide directing secretion; that stretch reads MQNLSLSLVILSVLIAVTLA. A Zn(2+)-binding site is contributed by cysteine 21. The tract at residues 21–25 is involved in metalloproteinase-binding; the sequence is CKCRE. 3 disulfides stabilise this stretch: cysteine 21-cysteine 96, cysteine 23-cysteine 123, and cysteine 33-cysteine 158. In terms of domain architecture, NTR spans 21-158; sequence CKCREQSTKE…LQSQVKSIKC (138 aa). An N-linked (GlcNAc...) asparagine glycan is attached at asparagine 79. Residues 93 to 94 are involved in metalloproteinase-binding; sequence AP.

It belongs to the protease inhibitor I35 (TIMP) family.

Its subcellular location is the secreted. Complexes with metalloproteinases and irreversibly inactivates them by binding to their catalytic zinc cofactor. This chain is Putative metalloproteinase inhibitor tag-225 (tag-225), found in Caenorhabditis elegans.